The sequence spans 157 residues: Small ribosomal subunit protein uS7 (157 aa).

The protein belongs to the universal ribosomal protein uS7 family. In terms of assembly, part of the 30S ribosomal subunit. Contacts proteins S9 and S11.

In terms of biological role, one of the primary rRNA binding proteins, it binds directly to 16S rRNA where it nucleates assembly of the head domain of the 30S subunit. Is located at the subunit interface close to the decoding center, probably blocks exit of the E-site tRNA. The chain is Small ribosomal subunit protein uS7 from Leptospira interrogans serogroup Icterohaemorrhagiae serovar copenhageni (strain Fiocruz L1-130).